Consider the following 194-residue polypeptide: Fe/S biogenesis protein NfuA (194 aa).

[4Fe-4S] cluster is bound by residues Cys152 and Cys155.

Belongs to the NfuA family. As to quaternary structure, homodimer. The cofactor is [4Fe-4S] cluster.

Its function is as follows. Involved in iron-sulfur cluster biogenesis. Binds a 4Fe-4S cluster, can transfer this cluster to apoproteins, and thereby intervenes in the maturation of Fe/S proteins. Could also act as a scaffold/chaperone for damaged Fe/S proteins. The polypeptide is Fe/S biogenesis protein NfuA (Teredinibacter turnerae (strain ATCC 39867 / T7901)).